The sequence spans 347 residues: Protein RecA (347 aa).

64–71 (GPESSGKT) is a binding site for ATP.

This sequence belongs to the RecA family.

The protein localises to the cytoplasm. Its function is as follows. Can catalyze the hydrolysis of ATP in the presence of single-stranded DNA, the ATP-dependent uptake of single-stranded DNA by duplex DNA, and the ATP-dependent hybridization of homologous single-stranded DNAs. It interacts with LexA causing its activation and leading to its autocatalytic cleavage. The protein is Protein RecA of Bartonella quintana (strain Toulouse) (Rochalimaea quintana).